An 861-amino-acid chain; its full sequence is Putative glutamate--cysteine ligase 2-2 (861 aa).

Positions 1–372 are carboxylate-amine ligase; the sequence is MSDARIVAVG…RDVPPAGAAA (372 aa). Residues 373 to 861 are unknown; the sequence is ALGSAPAVSA…GSKDTWIPRR (489 aa).

This sequence in the N-terminal section; belongs to the glutamate--cysteine ligase type 2 family. YbdK subfamily.

The enzyme catalyses L-cysteine + L-glutamate + ATP = gamma-L-glutamyl-L-cysteine + ADP + phosphate + H(+). Its function is as follows. ATP-dependent carboxylate-amine ligase which exhibits weak glutamate--cysteine ligase activity. The sequence is that of Putative glutamate--cysteine ligase 2-2 from Frankia casuarinae (strain DSM 45818 / CECT 9043 / HFP020203 / CcI3).